The primary structure comprises 954 residues: Glycine dehydrogenase (decarboxylating) (954 aa).

K704 is modified (N6-(pyridoxal phosphate)lysine).

It belongs to the GcvP family. In terms of assembly, the glycine cleavage system is composed of four proteins: P, T, L and H. Pyridoxal 5'-phosphate serves as cofactor.

It carries out the reaction N(6)-[(R)-lipoyl]-L-lysyl-[glycine-cleavage complex H protein] + glycine + H(+) = N(6)-[(R)-S(8)-aminomethyldihydrolipoyl]-L-lysyl-[glycine-cleavage complex H protein] + CO2. The glycine cleavage system catalyzes the degradation of glycine. The P protein binds the alpha-amino group of glycine through its pyridoxal phosphate cofactor; CO(2) is released and the remaining methylamine moiety is then transferred to the lipoamide cofactor of the H protein. In Vibrio vulnificus (strain YJ016), this protein is Glycine dehydrogenase (decarboxylating).